We begin with the raw amino-acid sequence, 376 residues long: 4-hydroxy-3-methylbut-2-en-1-yl diphosphate synthase (flavodoxin) (376 aa).

Positions 270, 273, 305, and 312 each coordinate [4Fe-4S] cluster.

Belongs to the IspG family. It depends on [4Fe-4S] cluster as a cofactor.

The catalysed reaction is (2E)-4-hydroxy-3-methylbut-2-enyl diphosphate + oxidized [flavodoxin] + H2O + 2 H(+) = 2-C-methyl-D-erythritol 2,4-cyclic diphosphate + reduced [flavodoxin]. It functions in the pathway isoprenoid biosynthesis; isopentenyl diphosphate biosynthesis via DXP pathway; isopentenyl diphosphate from 1-deoxy-D-xylulose 5-phosphate: step 5/6. Its function is as follows. Converts 2C-methyl-D-erythritol 2,4-cyclodiphosphate (ME-2,4cPP) into 1-hydroxy-2-methyl-2-(E)-butenyl 4-diphosphate. In Colwellia psychrerythraea (strain 34H / ATCC BAA-681) (Vibrio psychroerythus), this protein is 4-hydroxy-3-methylbut-2-en-1-yl diphosphate synthase (flavodoxin).